We begin with the raw amino-acid sequence, 351 residues long: 3-dehydroquinate synthase (351 aa).

Residues 60-65 (DGEEYK), 94-98 (GVISD), 118-119 (TT), lysine 131, lysine 140, and 158-161 (FLKT) each bind NAD(+). Residues glutamate 173, histidine 239, and histidine 256 each contribute to the Zn(2+) site.

The protein belongs to the sugar phosphate cyclases superfamily. Dehydroquinate synthase family. The cofactor is Co(2+). Zn(2+) serves as cofactor. It depends on NAD(+) as a cofactor.

The protein resides in the cytoplasm. It catalyses the reaction 7-phospho-2-dehydro-3-deoxy-D-arabino-heptonate = 3-dehydroquinate + phosphate. Its pathway is metabolic intermediate biosynthesis; chorismate biosynthesis; chorismate from D-erythrose 4-phosphate and phosphoenolpyruvate: step 2/7. Functionally, catalyzes the conversion of 3-deoxy-D-arabino-heptulosonate 7-phosphate (DAHP) to dehydroquinate (DHQ). This is 3-dehydroquinate synthase from Campylobacter jejuni subsp. jejuni serotype O:6 (strain 81116 / NCTC 11828).